Consider the following 190-residue polypeptide: Small ribosomal subunit protein uS4c (190 aa).

Residues 92–152 enclose the S4 RNA-binding domain; sequence RLDHVVYRAG…KSPSSAQLPP (61 aa).

This sequence belongs to the universal ribosomal protein uS4 family. In terms of assembly, part of the 30S ribosomal subunit. Contacts protein S5. The interaction surface between S4 and S5 is involved in control of translational fidelity.

It is found in the plastid. Its subcellular location is the chloroplast. In terms of biological role, one of the primary rRNA binding proteins, it binds directly to 16S rRNA where it nucleates assembly of the body of the 30S subunit. Functionally, with S5 and S12 plays an important role in translational accuracy. In Cyanidioschyzon merolae (strain NIES-3377 / 10D) (Unicellular red alga), this protein is Small ribosomal subunit protein uS4c (rps4).